The chain runs to 195 residues: Putative inactive carbonic anhydrase 5B-like protein (195 aa).

Substrate is bound at residue 121–122 (TT).

The protein belongs to the alpha-carbonic anhydrase family.

In Homo sapiens (Human), this protein is Putative inactive carbonic anhydrase 5B-like protein (CA5BP1).